The following is a 457-amino-acid chain: Autophagy-related protein 14 (457 aa).

Positions R31–K109 form a coiled coil. Disordered stretches follow at residues E54–A73, P252–P274, and N433–R457. A compositionally biased stretch (low complexity) spans S253–T266.

The protein belongs to the ATG14 family. As to quaternary structure, component of the autophagy-specific VPS34 PI3-kinase complex I.

Its subcellular location is the preautophagosomal structure membrane. The protein resides in the vacuole membrane. Its function is as follows. Required for cytoplasm to vacuole transport (Cvt) and autophagy as a part of the autophagy-specific VPS34 PI3-kinase complex I. This complex is essential to recruit the ATG8-phosphatidylinositol conjugate and the ATG12-ATG5 conjugate to the pre-autophagosomal structure. ATG14 mediates the specific binding of the VPS34 PI3-kinase complex I to the preautophagosomal structure (PAS). Autophagy is required for proper vegetative growth, asexual/sexual reproduction, and full virulence. Autophagy is particularly involved in the biosynthesis of deoxynivalenol (DON), an important virulence determinant. This chain is Autophagy-related protein 14, found in Gibberella zeae (strain ATCC MYA-4620 / CBS 123657 / FGSC 9075 / NRRL 31084 / PH-1) (Wheat head blight fungus).